The chain runs to 238 residues: Ribosomal RNA small subunit methyltransferase G (238 aa).

S-adenosyl-L-methionine is bound by residues glycine 78, 129–130 (AE), and arginine 148.

This sequence belongs to the methyltransferase superfamily. RNA methyltransferase RsmG family.

Its subcellular location is the cytoplasm. Functionally, specifically methylates the N7 position of a guanine in 16S rRNA. The sequence is that of Ribosomal RNA small subunit methyltransferase G from Caldicellulosiruptor bescii (strain ATCC BAA-1888 / DSM 6725 / KCTC 15123 / Z-1320) (Anaerocellum thermophilum).